The sequence spans 215 residues: uncharacterized protein (215 aa).

Transmembrane regions (helical) follow at residues 1–21, 36–56, 67–87, 92–112, and 118–138; these read MTAEFIIRLILAAIACGAIGM, VLIGMGSALFMIVSKYGFADV, SRIAAQVVTGVGFIGAGNILV, IVGLTTAADIWVTAAIGMVIG, and LGIYGSVMTLLVLEVFHQLTF.

It belongs to the MgtC/SapB family.

It localises to the cell inner membrane. This is an uncharacterized protein from Escherichia coli O157:H7.